We begin with the raw amino-acid sequence, 269 residues long: UPF0739 protein C1orf74 (269 aa).

The protein belongs to the UPF0739 family.

This Homo sapiens (Human) protein is UPF0739 protein C1orf74 (C1orf74).